The sequence spans 341 residues: Phosphoribosylformylglycinamidine cyclo-ligase (341 aa).

Belongs to the AIR synthase family.

It is found in the cytoplasm. It carries out the reaction 2-formamido-N(1)-(5-O-phospho-beta-D-ribosyl)acetamidine + ATP = 5-amino-1-(5-phospho-beta-D-ribosyl)imidazole + ADP + phosphate + H(+). The protein operates within purine metabolism; IMP biosynthesis via de novo pathway; 5-amino-1-(5-phospho-D-ribosyl)imidazole from N(2)-formyl-N(1)-(5-phospho-D-ribosyl)glycinamide: step 2/2. The sequence is that of Phosphoribosylformylglycinamidine cyclo-ligase from Alkaliphilus oremlandii (strain OhILAs) (Clostridium oremlandii (strain OhILAs)).